Reading from the N-terminus, the 271-residue chain is uncharacterized protein (271 aa).

A disordered region spans residues 1-202 (MLNSPGTRRP…APSSALSHQG (202 aa)). Over residues 10–23 (PVKEAQKYGEDSQK) the composition is skewed to basic and acidic residues. Low complexity-rich tracts occupy residues 33 to 50 (RSSV…SSSP) and 59 to 73 (GRPS…TSAP). The span at 92 to 101 (TRSSANQLPQ) shows a compositional bias: polar residues. A compositionally biased stretch (basic residues) spans 121 to 142 (LRRRSHGDRCVPRSRRRPRPRP).

This is an uncharacterized protein from Homo sapiens (Human).